A 225-amino-acid chain; its full sequence is Futalosine hydrolase (225 aa).

This sequence belongs to the PNP/UDP phosphorylase family. Futalosine hydrolase subfamily. Homotetramer.

The enzyme catalyses futalosine + H2O = dehypoxanthine futalosine + hypoxanthine. It participates in quinol/quinone metabolism; menaquinone biosynthesis. With respect to regulation, no enhancing of inhibitory effects are observed with divalent metal ions. Slightly inhibited by hypoxanthine. Its function is as follows. Catalyzes the hydrolysis of futalosine (FL) to dehypoxanthine futalosine (DHFL) and hypoxanthine, a step in the biosynthesis of menaquinone (MK, vitamin K2). Is highly specific to futalosine since it does not accept aminodeoxyfutalosine (AFL), or any structurally related nucleotides and nucleosides as substrate. This Thermus thermophilus (strain ATCC 27634 / DSM 579 / HB8) protein is Futalosine hydrolase.